We begin with the raw amino-acid sequence, 131 residues long: Small ribosomal subunit protein uS8 (131 aa).

This sequence belongs to the universal ribosomal protein uS8 family. In terms of assembly, part of the 30S ribosomal subunit. Contacts proteins S5 and S12.

One of the primary rRNA binding proteins, it binds directly to 16S rRNA central domain where it helps coordinate assembly of the platform of the 30S subunit. The sequence is that of Small ribosomal subunit protein uS8 from Aromatoleum aromaticum (strain DSM 19018 / LMG 30748 / EbN1) (Azoarcus sp. (strain EbN1)).